The chain runs to 344 residues: Gas vesicle ATPase GvpN2 (344 aa).

The tract at residues 1–55 (MTDTSRNRKVRGSKIRSSRSDKRQSRGSEDKELKRLADARDTDSEQAGDRVGDAF) is disordered. The span at 7–17 (NRKVRGSKIRS) shows a compositional bias: basic residues. A compositionally biased stretch (basic and acidic residues) spans 18 to 52 (SRSDKRQSRGSEDKELKRLADARDTDSEQAGDRVG). ATP is bound at residue 89 to 96 (GPTGCGKT).

Belongs to the CbbQ/NirQ/NorQ/GpvN family. In terms of assembly, forms homodimers, a GvpN-GvpO heterodimer, interacts with GvpC and GvpL, might interact with GvpA.

Its subcellular location is the gas vesicle. It localises to the cytoplasm. It catalyses the reaction ATP + H2O = ADP + phosphate + H(+). In terms of biological role, an ATPase that functions in gas vesicle formation. A minor component of the gas vesicle, also found in soluble extracts. Gas vesicles are hollow, gas filled proteinaceous nanostructures found in several microbial planktonic microorganisms. They allow positioning of halobacteria at the optimal depth for growth in the poorly aerated, shallow brine pools of their habitat. Functionally, expression of 2 c-vac DNA fragments containing 2 divergently transcribed regions (gvpE-gvpF-gvpG-gvpH-gvpI-gvpJ-gvpK-gvpL-gvpM and gvpA-gvpC-gvpN-gvpO) allows H.volcanii to produce gas vesicles. In Halobacterium salinarum (strain ATCC 700922 / JCM 11081 / NRC-1) (Halobacterium halobium), this protein is Gas vesicle ATPase GvpN2.